Here is a 100-residue protein sequence, read N- to C-terminus: EKC/KEOPS complex subunit GON7 (100 aa).

At Met-1 the chain carries N-acetylmethionine. The tract at residues 50-100 (SPVQGEAQDRVAAAPEEALDGDDEDDAEDENNIDNRTNSDGPTAKRPKPPS) is disordered. A compositionally biased stretch (acidic residues) spans 66-81 (EALDGDDEDDAEDENN).

As to quaternary structure, component of the EKC/KEOPS complex composed of at least GON7, TP53RK, TPRKB, OSGEP and LAGE3; the whole complex dimerizes.

It is found in the nucleus. Its function is as follows. Component of the EKC/KEOPS complex that is required for the formation of a threonylcarbamoyl group on adenosine at position 37 (t(6)A37) in tRNAs that read codons beginning with adenine. The complex is probably involved in the transfer of the threonylcarbamoyl moiety of threonylcarbamoyl-AMP (TC-AMP) to the N6 group of A37. GON7 plays a supporting role to the catalytic subunit OSGEP in the complex. This Sus scrofa (Pig) protein is EKC/KEOPS complex subunit GON7.